We begin with the raw amino-acid sequence, 126 residues long: Small ribosomal subunit protein uS13 (126 aa).

The interval 98 to 126 (PVRGQSTKNNARTRKGRKKTVANKKKATK) is disordered. A compositionally biased stretch (basic residues) spans 108 to 126 (ARTRKGRKKTVANKKKATK).

It belongs to the universal ribosomal protein uS13 family. In terms of assembly, part of the 30S ribosomal subunit. Forms a loose heterodimer with protein S19. Forms two bridges to the 50S subunit in the 70S ribosome.

In terms of biological role, located at the top of the head of the 30S subunit, it contacts several helices of the 16S rRNA. In the 70S ribosome it contacts the 23S rRNA (bridge B1a) and protein L5 of the 50S subunit (bridge B1b), connecting the 2 subunits; these bridges are implicated in subunit movement. Contacts the tRNAs in the A and P-sites. This Bacteroides fragilis (strain ATCC 25285 / DSM 2151 / CCUG 4856 / JCM 11019 / LMG 10263 / NCTC 9343 / Onslow / VPI 2553 / EN-2) protein is Small ribosomal subunit protein uS13.